An 85-amino-acid polypeptide reads, in one-letter code: Kappa-theraphotoxin-Cg1d (85 aa).

Positions 1-21 (MKVSVLITLAVLGVMFVWASA) are cleaved as a signal peptide. The propeptide occupies 22 to 51 (AELEERGSDQRDSPAWLKSMERIFQSEERE). 3 disulfide bridges follow: C52-C66, C59-C71, and C65-C78.

Belongs to the neurotoxin 10 (Hwtx-1) family. 28 (Jztx-11) subfamily. Expressed by the venom gland.

The protein localises to the secreted. In terms of biological role, probable ion channel inhibitor. This chain is Kappa-theraphotoxin-Cg1d, found in Chilobrachys guangxiensis (Chinese earth tiger tarantula).